We begin with the raw amino-acid sequence, 445 residues long: Proline--tRNA ligase (445 aa).

Belongs to the class-II aminoacyl-tRNA synthetase family. ProS type 2 subfamily. As to quaternary structure, homodimer.

The protein localises to the cytoplasm. It carries out the reaction tRNA(Pro) + L-proline + ATP = L-prolyl-tRNA(Pro) + AMP + diphosphate. Functionally, catalyzes the attachment of proline to tRNA(Pro) in a two-step reaction: proline is first activated by ATP to form Pro-AMP and then transferred to the acceptor end of tRNA(Pro). The polypeptide is Proline--tRNA ligase (Cereibacter sphaeroides (strain ATCC 17029 / ATH 2.4.9) (Rhodobacter sphaeroides)).